The sequence spans 176 residues: Ribosome maturation factor RimM (176 aa).

In terms of domain architecture, PRC barrel spans 97–176 (EDEFYWRDLI…QILVDWDPDF (80 aa)).

The protein belongs to the RimM family. As to quaternary structure, binds ribosomal protein uS19.

The protein localises to the cytoplasm. An accessory protein needed during the final step in the assembly of 30S ribosomal subunit, possibly for assembly of the head region. Essential for efficient processing of 16S rRNA. May be needed both before and after RbfA during the maturation of 16S rRNA. It has affinity for free ribosomal 30S subunits but not for 70S ribosomes. This Shewanella sp. (strain ANA-3) protein is Ribosome maturation factor RimM.